We begin with the raw amino-acid sequence, 350 residues long: MQTVNTHKLISHLQQQGQFLTLSRCSGELVQNPISFTLYEHTQVSIISPGIISFSPKIKSDKAIVLSSGIHGNETAPIEICDQYVIDILTGKIRVAHRILFIFGNLPAMDRATRFVDENLNRLFSHAHASESVDQNSYECARAKEIEEAVAEFYGSGHGEESRYHYDLHTAIRPSKNEKFAVYPFLHGEKHDKEQISFLLACGIDTFLLSGSPTTTFSYYSSRQFGAHAFTVELGKVQAFGQNDMSRFTQVNDTLKRFISGQPLNLKSFNDQDVLIYQVNQVINKHAEDFELDFSDDLPNFSDFPKGTLLAHETGNEYRAEFDGEAVVFPNANVAIGQRAILTVIPTTLD.

Zn(2+)-binding residues include His-71, Glu-74, and His-169. Glu-233 is a catalytic residue.

It belongs to the AspA/AstE family. Succinylglutamate desuccinylase subfamily. Zn(2+) serves as cofactor.

The catalysed reaction is N-succinyl-L-glutamate + H2O = L-glutamate + succinate. It participates in amino-acid degradation; L-arginine degradation via AST pathway; L-glutamate and succinate from L-arginine: step 5/5. Its function is as follows. Transforms N(2)-succinylglutamate into succinate and glutamate. The sequence is that of Succinylglutamate desuccinylase from Pseudoalteromonas atlantica (strain T6c / ATCC BAA-1087).